The primary structure comprises 449 residues: UDP-N-acetylmuramate--L-alanine ligase (449 aa).

ATP is bound at residue 113–119 (GSHGKTT).

Belongs to the MurCDEF family.

The protein localises to the cytoplasm. It carries out the reaction UDP-N-acetyl-alpha-D-muramate + L-alanine + ATP = UDP-N-acetyl-alpha-D-muramoyl-L-alanine + ADP + phosphate + H(+). Its pathway is cell wall biogenesis; peptidoglycan biosynthesis. Cell wall formation. In Hydrogenobaculum sp. (strain Y04AAS1), this protein is UDP-N-acetylmuramate--L-alanine ligase.